Reading from the N-terminus, the 310-residue chain is Ribosomal RNA small subunit methyltransferase H (310 aa).

S-adenosyl-L-methionine is bound by residues 32 to 34 (GGH), aspartate 52, phenylalanine 79, aspartate 100, and glutamine 107.

Belongs to the methyltransferase superfamily. RsmH family.

Its subcellular location is the cytoplasm. The enzyme catalyses cytidine(1402) in 16S rRNA + S-adenosyl-L-methionine = N(4)-methylcytidine(1402) in 16S rRNA + S-adenosyl-L-homocysteine + H(+). Its function is as follows. Specifically methylates the N4 position of cytidine in position 1402 (C1402) of 16S rRNA. In Bacillus anthracis (strain A0248), this protein is Ribosomal RNA small subunit methyltransferase H.